A 72-amino-acid polypeptide reads, in one-letter code: Translation initiation factor IF-1 (72 aa).

Residues 1-72 (MAKDDVIEID…DKGRITYRYK (72 aa)) form the S1-like domain.

It belongs to the IF-1 family. As to quaternary structure, component of the 30S ribosomal translation pre-initiation complex which assembles on the 30S ribosome in the order IF-2 and IF-3, IF-1 and N-formylmethionyl-tRNA(fMet); mRNA recruitment can occur at any time during PIC assembly.

The protein resides in the cytoplasm. In terms of biological role, one of the essential components for the initiation of protein synthesis. Stabilizes the binding of IF-2 and IF-3 on the 30S subunit to which N-formylmethionyl-tRNA(fMet) subsequently binds. Helps modulate mRNA selection, yielding the 30S pre-initiation complex (PIC). Upon addition of the 50S ribosomal subunit IF-1, IF-2 and IF-3 are released leaving the mature 70S translation initiation complex. The protein is Translation initiation factor IF-1 of Campylobacter curvus (strain 525.92).